Reading from the N-terminus, the 118-residue chain is NADH-quinone oxidoreductase subunit A 2 (118 aa).

Transmembrane regions (helical) follow at residues Tyr-5–Phe-25, Ile-62–Val-82, and Leu-87–Ile-107.

The protein belongs to the complex I subunit 3 family. In terms of assembly, NDH-1 is composed of 14 different subunits. Subunits NuoA, H, J, K, L, M, N constitute the membrane sector of the complex.

It is found in the cell inner membrane. The catalysed reaction is a quinone + NADH + 5 H(+)(in) = a quinol + NAD(+) + 4 H(+)(out). Functionally, NDH-1 shuttles electrons from NADH, via FMN and iron-sulfur (Fe-S) centers, to quinones in the respiratory chain. The immediate electron acceptor for the enzyme in this species is believed to be ubiquinone. Couples the redox reaction to proton translocation (for every two electrons transferred, four hydrogen ions are translocated across the cytoplasmic membrane), and thus conserves the redox energy in a proton gradient. This is NADH-quinone oxidoreductase subunit A 2 from Geotalea uraniireducens (strain Rf4) (Geobacter uraniireducens).